We begin with the raw amino-acid sequence, 184 residues long: F(420)H(2) dehydrogenase subunit B (184 aa).

The disordered stretch occupies residues 1–20 (MGEVKETKTNNSKENPEEEV). Residues cysteine 61, cysteine 62, cysteine 126, and cysteine 156 each coordinate [4Fe-4S] cluster.

The protein belongs to the complex I 20 kDa subunit family. As to quaternary structure, the FPO complex is composed of at least 13 different subunits. Requires FAD as cofactor. [4Fe-4S] cluster is required as a cofactor.

It is found in the cell inner membrane. It catalyses the reaction methanophenazine + reduced coenzyme F420-(gamma-L-Glu)(n) = dihydromethanophenazine + oxidized coenzyme F420-(gamma-L-Glu)(n) + H(+). Functionally, component of the F(420)H(2) dehydrogenase (FPO complex) which is part of the energy-conserving F(420)H(2):heterodisulfide oxidoreductase system. The membrane-bound electron transfer system of the complex plays an important role in the metabolism of methylotrophic methanogens when the organisms grow on methanol or methylamines. Catalyzes the oxidation of methanophenazine to dihydromethanophenazine. It shuttles electrons from F(420)H(2), via FAD and iron-sulfur (Fe-S) centers, to methanophenazine (an electron carrier in the membrane). It couples the redox reaction to proton translocation (for every two electrons transferred, two hydrogen ions are translocated across the cytoplasmic membrane), and thus conserves the redox energy in a proton gradient. It also catalyzes the oxidation of F(420)H(2) with quinones such as 2,3-dimethyl-1,4-naphthoquinone, 2-methyl-1,4-naphthoquinone and tetramethyl-p-benzoquinone. This is F(420)H(2) dehydrogenase subunit B (fpoB) from Methanosarcina mazei (strain ATCC BAA-159 / DSM 3647 / Goe1 / Go1 / JCM 11833 / OCM 88) (Methanosarcina frisia).